Here is a 276-residue protein sequence, read N- to C-terminus: MDLWTAAQALILGIVEGLTEFLPISSTGHQIIVADLLDFGGERAMAFNIIIQLGAILAVVWEFRRKILDVVIGLPTQPKAQRFTINLLIAFLPAVVLGVIFADLIHAYLFNPITVATALVVGGLIMLWAERRQHQVHAETVDDITWKDALKVGCAQCLAMIPGTSRSGSTIIGGLLFGLSRKTATEFSFFLAMPTMVGAAVYSGYKYRHLFQPDDFPVFAIGFVTAFVFAMIAVKGLLKFIASHSYAAFAWYRIAFGLLILATWQFGWVDWTAAKP.

The next 6 membrane-spanning stretches (helical) occupy residues 43–63 (RAMA…VWEF), 85–105 (INLL…ADLI), 109–129 (LFNP…MLWA), 184–204 (ATEF…VYSG), 218–238 (VFAI…KGLL), and 254–274 (IAFG…WTAA).

The protein belongs to the UppP family.

The protein resides in the cell inner membrane. It catalyses the reaction di-trans,octa-cis-undecaprenyl diphosphate + H2O = di-trans,octa-cis-undecaprenyl phosphate + phosphate + H(+). In terms of biological role, catalyzes the dephosphorylation of undecaprenyl diphosphate (UPP). Confers resistance to bacitracin. The chain is Undecaprenyl-diphosphatase from Pseudomonas fluorescens (strain ATCC BAA-477 / NRRL B-23932 / Pf-5).